Reading from the N-terminus, the 143-residue chain is Putative protein FPV235 (143 aa).

The sequence is that of Putative protein FPV235 from Vertebrata (FPV).